A 518-amino-acid polypeptide reads, in one-letter code: Voltage-gated potassium channel regulatory subunit KCNG2 (518 aa).

Over M1 to I214 the chain is Cytoplasmic. A helical transmembrane segment spans residues P215 to I236. Residues S237 to D257 lie on the Extracellular side of the membrane. A helical membrane pass occupies residues I258–Q279. Residues A280–P290 are Cytoplasmic-facing. A helical transmembrane segment spans residues L291–A311. Residues S312–V331 are Extracellular-facing. A helical; Voltage-sensor transmembrane segment spans residues G332 to H352. At S353 to T367 the chain is on the cytoplasmic side. Residues R368 to Y389 form a helical membrane-spanning segment. Topologically, residues L390–I404 are extracellular. The helical intramembrane region spans P405–T416. The Selectivity filter signature appears at T417 to D422. The stretch at T417–V424 is an intramembrane region. The Extracellular portion of the chain corresponds to P425–Q431. The chain crosses the membrane as a helical span at residues V432 to Y460. The Cytoplasmic segment spans residues S461–C518. Residues R473–C518 form a disordered region. Over residues A501 to C518 the composition is skewed to basic and acidic residues.

It belongs to the potassium channel family. G (TC 1.A.1.2) subfamily. Kv6.2/KCNG2 sub-subfamily. As to quaternary structure, heterodimer with KCNB1.

Its subcellular location is the cell membrane. Functionally, regulatory alpha-subunit of the voltage-gated potassium (Kv) channel which, when coassembled with KCNB1, can modulate the kinetics and conductance-voltage relationship. Modulates channel activity by shifting the threshold and the half-maximal activation to more negative values. Potassium channel subunit that does not form functional channels by itself. The polypeptide is Voltage-gated potassium channel regulatory subunit KCNG2 (Gallus gallus (Chicken)).